The chain runs to 446 residues: ATP synthase subunit b-delta (446 aa).

The segment at 1 to 168 is ATP synthase subunit b; it reads MSTFIGQLVG…PKGADVEYPL (168 aa). A helical membrane pass occupies residues 4-24; it reads FIGQLVGFAAIVYLVWWYVVP. An ATP synthase subunit delta region spans residues 169–446; it reads LAKMRSASRR…LVAAEAALPD (278 aa).

The protein in the N-terminal section; belongs to the ATPase B chain family. In the C-terminal section; belongs to the ATPase delta chain family. In terms of assembly, F-type ATPases have 2 components, F(1) - the catalytic core - and F(0) - the membrane proton channel. F(1) has five subunits: alpha(3), beta(3), gamma(1), delta(1), epsilon(1). F(0) has three main subunits: a(1), b(2) and c(10-14). The alpha and beta chains form an alternating ring which encloses part of the gamma chain. F(1) is attached to F(0) by a central stalk formed by the gamma and epsilon chains, while a peripheral stalk is formed by the delta and b chains.

It localises to the cell membrane. In terms of biological role, f(1)F(0) ATP synthase produces ATP from ADP in the presence of a proton or sodium gradient. F-type ATPases consist of two structural domains, F(1) containing the extramembraneous catalytic core and F(0) containing the membrane proton channel, linked together by a central stalk and a peripheral stalk. During catalysis, ATP synthesis in the catalytic domain of F(1) is coupled via a rotary mechanism of the central stalk subunits to proton translocation. Functionally, this fusion protein includes a component of the F(0) channel (subunit b) and of the F(1) subunit (subunit delta). Two copies of subunit b and one of delta together form the peripheral 'stator' stalk which links F(1) to F(0). The sequence is that of ATP synthase subunit b-delta (atpFH) from Mycobacterium leprae (strain Br4923).